The chain runs to 996 residues: Disease resistance protein RGA4 (996 aa).

Positions 1-176 (MEAALLSGFI…PRIHEADLVG (176 aa)) are structured coiled coil (CC) domain. The stretch at 111-138 (NLQLAQQLQRLKRMAAEANQRKQRYTAA) forms a coiled coil. The 283-residue stretch at 180–462 (DREELLEQLA…RWLAEGFVEP (283 aa)) folds into the NB-ARC domain. LRR repeat units lie at residues 481 to 503 (RNII…TYGM), 504 to 528 (MREF…KFVP), 529 to 549 (KYVR…NFNG), 577 to 599 (LRVL…ICNL), 600 to 621 (VLLK…IAKL), 622 to 644 (KDLE…VFGL), 698 to 722 (MNKL…DLRE), 759 to 781 (PCYL…VTSL), 782 to 804 (RGLK…ALSN), 805 to 830 (LSYL…GFPR), and 851 to 874 (LPFL…QIEC).

Belongs to the disease resistance NB-LRR family. Forms homodimer or heterodimer with RGA5 through its coiled coil (CC) domain. As to expression, expressed in leaves.

It localises to the cytoplasm. Functionally, disease resistance (R) protein. Resistance proteins guard the plant against pathogens that contain an appropriate avirulence protein via an indirect interaction with this avirulence protein. That triggers a defense system including the hypersensitive response, which restricts the pathogen growth. Contribution of RGA5 is required to recognize the effector avirulence proteins AVR-Pia and AVR1-CO39 from M.oryzae. Acts as a constitutively active cell death inducer that is repressed by RGA5. Immune response triggered by the RGA4-RGA5 -mediated recognition of AVR1-CO39 confers resistance to X.oryzae pathovars. This chain is Disease resistance protein RGA4, found in Oryza sativa subsp. japonica (Rice).